The following is an 846-amino-acid chain: Disks large-associated protein 5 (846 aa).

Ser67 bears the Phosphoserine; by CDK1 mark. A coiled-coil region spans residues 90–120; sequence RKQMLQKYKEEKQLQKLKEQREKAKRGIFKV. Positions 153 to 284 are disordered; that stretch reads TRSKAKDQME…TNATSGMNPD (132 aa). 2 stretches are compositionally biased toward basic and acidic residues: residues 156–174 and 182–194; these read KAKD…DVRA and TSEK…EKKV. Residue Ser202 is modified to Phosphoserine. The span at 203–225 shows a compositional bias: polar residues; it reads LRMTRSATQAAKQVPRTVSSTTA. Basic and acidic residues predominate over residues 250 to 266; sequence KNVETKPDKGISCKVDS. A compositionally biased stretch (polar residues) spans 269-281; the sequence is NTLNSQTNATSGM. Thr326 carries the phosphothreonine modification. A Phosphothreonine; by CDK1 modification is found at Thr329. Thr338 is subject to Phosphothreonine. A Glycyl lysine isopeptide (Lys-Gly) (interchain with G-Cter in SUMO2) cross-link involves residue Lys347. Thr401 and Thr402 each carry phosphothreonine; by CDK1. Ser618 carries the post-translational modification Phosphoserine; by CDK1. Phosphoserine; by AURKA is present on Ser627. The segment covering 628-671 has biased composition (polar residues); it reads VSSEGPSQRLGTPKSVNKAVSQSRNEMGIPQQTTSPENAGPQNT. The tract at residues 628–674 is disordered; sequence VSSEGPSQRLGTPKSVNKAVSQSRNEMGIPQQTTSPENAGPQNTKSE. Phosphoserine occurs at positions 629 and 634. Thr639 carries the phosphothreonine; by CDK1 modification. Ser642 is modified (phosphoserine; by CDK1). Ser662 is subject to Phosphoserine. Phosphoserine; by AURKA occurs at positions 725 and 757. Thr759 carries the phosphothreonine; by CDK1 modification. Residues Ser774 and Ser777 each carry the phosphoserine modification. Thr784 is modified (phosphothreonine). Phosphoserine occurs at positions 806 and 812. The residue at position 830 (Ser830) is a Phosphoserine; by AURKA. Ser839 is modified (phosphoserine; by CDK1).

It belongs to the SAPAP family. In terms of assembly, interacts with CDK1. Interacts with the C-terminal proline-rich region of FBXO7. Recruited by FBXO7 to a SCF (SKP1-CUL1-F-box) protein complex in a CDK1/Cyclin B-phosphorylation dependent manner. Interacts with CDH1. Ubiquitinated, leading to its degradation. In terms of processing, decreased phosphorylation levels are associated with the differentiation of intestinal epithelial cells. Abundantly expressed in fetal liver. Expressed at lower levels in bone marrow, testis, colon, and placenta.

It localises to the nucleus. It is found in the cytoplasm. The protein resides in the cytoskeleton. Its subcellular location is the spindle. Its function is as follows. Potential cell cycle regulator that may play a role in carcinogenesis of cancer cells. Mitotic phosphoprotein regulated by the ubiquitin-proteasome pathway. Key regulator of adherens junction integrity and differentiation that may be involved in CDH1-mediated adhesion and signaling in epithelial cells. The sequence is that of Disks large-associated protein 5 (DLGAP5) from Homo sapiens (Human).